The following is a 486-amino-acid chain: UDP-N-acetylmuramoyl-L-alanyl-D-glutamate--2,6-diaminopimelate ligase (486 aa).

Position 30 (Ser-30) interacts with UDP-N-acetyl-alpha-D-muramoyl-L-alanyl-D-glutamate. 111–117 (GTNGKTT) is an ATP binding site. UDP-N-acetyl-alpha-D-muramoyl-L-alanyl-D-glutamate-binding positions include 153-154 (TT), Ser-180, Gln-186, and Arg-188. Lys-220 bears the N6-carboxylysine mark. Meso-2,6-diaminopimelate-binding positions include Arg-378, 402–405 (DNPR), Gly-455, and Glu-459. Positions 402 to 405 (DNPR) match the Meso-diaminopimelate recognition motif motif.

It belongs to the MurCDEF family. MurE subfamily. Mg(2+) is required as a cofactor. In terms of processing, carboxylation is probably crucial for Mg(2+) binding and, consequently, for the gamma-phosphate positioning of ATP.

It is found in the cytoplasm. The enzyme catalyses UDP-N-acetyl-alpha-D-muramoyl-L-alanyl-D-glutamate + meso-2,6-diaminopimelate + ATP = UDP-N-acetyl-alpha-D-muramoyl-L-alanyl-gamma-D-glutamyl-meso-2,6-diaminopimelate + ADP + phosphate + H(+). The protein operates within cell wall biogenesis; peptidoglycan biosynthesis. In terms of biological role, catalyzes the addition of meso-diaminopimelic acid to the nucleotide precursor UDP-N-acetylmuramoyl-L-alanyl-D-glutamate (UMAG) in the biosynthesis of bacterial cell-wall peptidoglycan. The polypeptide is UDP-N-acetylmuramoyl-L-alanyl-D-glutamate--2,6-diaminopimelate ligase (Parabacteroides distasonis (strain ATCC 8503 / DSM 20701 / CIP 104284 / JCM 5825 / NCTC 11152)).